The following is a 532-amino-acid chain: Probable NAD kinase 1 (532 aa).

Residues 1–26 (MSLDELPHKVSDERVNHDTVTSHESE) show a composition bias toward basic and acidic residues. Residues 1 to 32 (MSLDELPHKVSDERVNHDTVTSHESEIGSGSI) are disordered.

It belongs to the NAD kinase family.

It catalyses the reaction NAD(+) + ATP = ADP + NADP(+) + H(+). This chain is Probable NAD kinase 1, found in Oryza sativa subsp. japonica (Rice).